Here is a 509-residue protein sequence, read N- to C-terminus: Galactose-1-phosphate uridylyltransferase (509 aa).

Belongs to the galactose-1-phosphate uridylyltransferase type 2 family.

Its subcellular location is the cytoplasm. It catalyses the reaction alpha-D-galactose 1-phosphate + UDP-alpha-D-glucose = alpha-D-glucose 1-phosphate + UDP-alpha-D-galactose. The protein operates within carbohydrate metabolism; galactose metabolism. In Fusobacterium nucleatum subsp. nucleatum (strain ATCC 25586 / DSM 15643 / BCRC 10681 / CIP 101130 / JCM 8532 / KCTC 2640 / LMG 13131 / VPI 4355), this protein is Galactose-1-phosphate uridylyltransferase.